The sequence spans 619 residues: 1-deoxy-D-xylulose-5-phosphate synthase (619 aa).

Residues His74 and 115–117 (GHS) each bind thiamine diphosphate. Mg(2+) is bound at residue Asp146. Thiamine diphosphate contacts are provided by residues 147–148 (GA), Asn175, Tyr285, and Glu365. Asn175 lines the Mg(2+) pocket.

This sequence belongs to the transketolase family. DXPS subfamily. As to quaternary structure, homodimer. Requires Mg(2+) as cofactor. Thiamine diphosphate is required as a cofactor.

The catalysed reaction is D-glyceraldehyde 3-phosphate + pyruvate + H(+) = 1-deoxy-D-xylulose 5-phosphate + CO2. The protein operates within metabolic intermediate biosynthesis; 1-deoxy-D-xylulose 5-phosphate biosynthesis; 1-deoxy-D-xylulose 5-phosphate from D-glyceraldehyde 3-phosphate and pyruvate: step 1/1. Catalyzes the acyloin condensation reaction between C atoms 2 and 3 of pyruvate and glyceraldehyde 3-phosphate to yield 1-deoxy-D-xylulose-5-phosphate (DXP). In Clostridium acetobutylicum (strain ATCC 824 / DSM 792 / JCM 1419 / IAM 19013 / LMG 5710 / NBRC 13948 / NRRL B-527 / VKM B-1787 / 2291 / W), this protein is 1-deoxy-D-xylulose-5-phosphate synthase.